The following is a 590-amino-acid chain: Pescadillo homolog (590 aa).

The region spanning 332 to 422 is the BRCT domain; it reads VCKSLFKDLK…IILPTEKYLV (91 aa). Positions 561–590 are disordered; sequence AMKISQSRKRSGVEIIEQRKKRLNDTQPSS.

Belongs to the pescadillo family. As to quaternary structure, interacts with BOP1 and WDR12. Interacts with NSN1. In terms of tissue distribution, expressed in shoot and root apical meristems, epidermal cells and vasculature of developing leaves, trichome progenitor cells, young flowers, developing pollen grains and ovules, and mature pollen grains.

The protein resides in the nucleus. It localises to the nucleolus. The protein localises to the nucleoplasm. Its function is as follows. Required for maturation of ribosomal RNAs and formation of the large ribosomal subunit. Plays an essential role in cell growth and survival through its regulation of ribosome biogenesis and mitotic progression. Required for normal root cell growth and differentiation. The chain is Pescadillo homolog from Arabidopsis thaliana (Mouse-ear cress).